We begin with the raw amino-acid sequence, 357 residues long: MHNQYGSIFSITTWGESHGPAIGVVIDGCPAGLSLSPEDFLPAMARRRPGQLHTSPRQEPDLVTILSGVYQNKTTGTPISLLIENKDVSSSSYEHLQHCYRPGHAQFAYEGKYGFADNRGGGRASARETASRVAAGVIAKKILLSQGIETLAFLSGFGTLESKNYPKLSDSLIQQVHTSPFYTLLPQEEIQNLLLLNPDDSFGGVVSFITSPLPIGLGEPVFGKLPALLAAGMMSIPAAKGFEIGAGFSSSQMTGSAYLDAFIADESGVSLQSNRCGGALGGISIGQPLEGRVAFKPTSSIKKPCSSVLKDGTPIAYRTPNQGRHDPCVAIRAVAVVEAMLDLTLVDLLLQHRCTQL.

NADP(+) is bound at residue R47. FMN contacts are provided by residues 123–125 (RAS), G281, 296–300 (KPTSS), and R324.

Belongs to the chorismate synthase family. As to quaternary structure, homotetramer. Requires FMNH2 as cofactor.

The catalysed reaction is 5-O-(1-carboxyvinyl)-3-phosphoshikimate = chorismate + phosphate. It functions in the pathway metabolic intermediate biosynthesis; chorismate biosynthesis; chorismate from D-erythrose 4-phosphate and phosphoenolpyruvate: step 7/7. Functionally, catalyzes the anti-1,4-elimination of the C-3 phosphate and the C-6 proR hydrogen from 5-enolpyruvylshikimate-3-phosphate (EPSP) to yield chorismate, which is the branch point compound that serves as the starting substrate for the three terminal pathways of aromatic amino acid biosynthesis. This reaction introduces a second double bond into the aromatic ring system. This is Chorismate synthase from Chlamydia trachomatis serovar L2 (strain ATCC VR-902B / DSM 19102 / 434/Bu).